The primary structure comprises 207 residues: 2,3-bisphosphoglycerate-dependent phosphoglycerate mutase (207 aa).

Residues 10–17 (RHGQSEWN), 23–24 (TG), arginine 62, 89–92 (ERDY), lysine 100, 116–117 (RR), and 160–161 (GN) contribute to the substrate site. Histidine 11 acts as the Tele-phosphohistidine intermediate in catalysis. The Proton donor/acceptor role is filled by glutamate 89.

Belongs to the phosphoglycerate mutase family. BPG-dependent PGAM subfamily. Homodimer.

The catalysed reaction is (2R)-2-phosphoglycerate = (2R)-3-phosphoglycerate. It participates in carbohydrate degradation; glycolysis; pyruvate from D-glyceraldehyde 3-phosphate: step 3/5. Functionally, catalyzes the interconversion of 2-phosphoglycerate and 3-phosphoglycerate. In Rhodopseudomonas palustris (strain BisB18), this protein is 2,3-bisphosphoglycerate-dependent phosphoglycerate mutase.